Reading from the N-terminus, the 78-residue chain is Small ribosomal subunit protein bS20 (78 aa).

The protein belongs to the bacterial ribosomal protein bS20 family.

Binds directly to 16S ribosomal RNA. The sequence is that of Small ribosomal subunit protein bS20 from Streptococcus pneumoniae serotype 2 (strain D39 / NCTC 7466).